The following is a 122-amino-acid chain: Small ribosomal subunit protein uS13 (122 aa).

Positions 95 to 122 are disordered; that stretch reads GLPVRGQRTKTNARTRKGPKKTIAGKKK.

It belongs to the universal ribosomal protein uS13 family. In terms of assembly, part of the 30S ribosomal subunit. Forms a loose heterodimer with protein S19. Forms two bridges to the 50S subunit in the 70S ribosome.

Located at the top of the head of the 30S subunit, it contacts several helices of the 16S rRNA. In the 70S ribosome it contacts the 23S rRNA (bridge B1a) and protein L5 of the 50S subunit (bridge B1b), connecting the 2 subunits; these bridges are implicated in subunit movement. Contacts the tRNAs in the A and P-sites. The chain is Small ribosomal subunit protein uS13 from Corynebacterium diphtheriae (strain ATCC 700971 / NCTC 13129 / Biotype gravis).